Here is a 684-residue protein sequence, read N- to C-terminus: 77 kDa membrane protein (684 aa).

The N-terminal stretch at 1–30 (MKFKSLITTTLALGVLASTGANFNNNEASA) is a signal peptide. 6 MAP repeats span residues 45–154 (GYSK…EDKK), 156–265 (DKAN…ENKA), 266–374 (KRNY…KADR), 375–474 (YVPY…TGTK), 475–584 (AKAD…KKNN), and 586–684 (SNNV…ELKF).

The protein localises to the cell membrane. Functionally, binds various plasma and ECM-proteins. In Staphylococcus aureus (strain COL), this protein is 77 kDa membrane protein.